Here is a 1030-residue protein sequence, read N- to C-terminus: Eukaryotic translation initiation factor 3 subunit A (1030 aa).

A coiled-coil region spans residues 94–126; sequence FKEIITPIEQKVDELKEKIEKENQENPLVEQNE. The 176-residue stretch at 308–483 folds into the PCI domain; that stretch reads SQLYSSVLLV…GVIRFGHYDF (176 aa). 2 coiled-coil regions span residues 527–620 and 720–772; these read INSL…KAKI and IQQE…RKNA. 5 stretches are compositionally biased toward basic and acidic residues: residues 576-591, 743-771, 800-931, 939-985, and 1003-1019; these read RDQQRLKEDMERREKE, EKARKEEQERERLEQEHLEQERLEEERKN, RGGD…RRDG, GRRD…RRDG, and DSWRSDNKKEENKKDAD. Disordered stretches follow at residues 576 to 603 and 737 to 1030; these read RDQQRLKEDMERREKEQAEEESQQNQLD and RIAA…KKRY.

This sequence belongs to the eIF-3 subunit A family. As to quaternary structure, component of the eukaryotic translation initiation factor 3 (eIF-3) complex.

The protein localises to the cytoplasm. In terms of biological role, RNA-binding component of the eukaryotic translation initiation factor 3 (eIF-3) complex, which is involved in protein synthesis of a specialized repertoire of mRNAs and, together with other initiation factors, stimulates binding of mRNA and methionyl-tRNAi to the 40S ribosome. The eIF-3 complex specifically targets and initiates translation of a subset of mRNAs involved in cell proliferation. The protein is Eukaryotic translation initiation factor 3 subunit A (eif3A) of Dictyostelium discoideum (Social amoeba).